A 301-amino-acid chain; its full sequence is G-protein coupled receptor homolog U51 (301 aa).

Residues 1–15 (MEKETKSLAWPATAE) are Extracellular-facing. A helical membrane pass occupies residues 16–36 (FYGWVFIFSSIQLCTVVFLTV). The Cytoplasmic segment spans residues 37 to 48 (RFNGFKVGREYA). The chain crosses the membrane as a helical span at residues 49–69 (VFTFAGMSFNCFLLPIKMGLL). Over 70–82 (SGHWTLPRDFCAI) the chain is Extracellular. Residues 83–103 (LLYIDDFSAYFSSWSLVFMAI) form a helical membrane-spanning segment. Residues 104–122 (ERINYFCYSTPLLNENSKA) lie on the Cytoplasmic side of the membrane. Residues 123-143 (LAKVCFPIVWVVSGVQALQML) form a helical membrane-spanning segment. At 144–168 (NNYKATALQNETGQCFLAFLRSGHD) the chain is on the extracellular side. A glycan (N-linked (GlcNAc...) asparagine; by host) is linked at Asn-153. A helical transmembrane segment spans residues 169-189 (MWLMLVYSVVIPVMLVFFYLY). At 190 to 199 (SKNFMLLKDE) the chain is on the cytoplasmic side. A helical membrane pass occupies residues 200-220 (LSSVTTYLCIYLLLGTIAHLP). Residues 221–238 (KAALSEIESDKIFYGLRD) are Extracellular-facing. Residues 239–259 (IFMALPVLKVYYISAMAYCMA) traverse the membrane as a helical segment. Residues 260–301 (CDDHTVPVRLCSIWLVNLCKKCFSCTRREKGSDLEVGIKMLK) are Cytoplasmic-facing.

It belongs to the G-protein coupled receptor 1 family.

The protein resides in the host cell membrane. This chain is G-protein coupled receptor homolog U51 (U51), found in Homo sapiens (Human).